The following is a 178-amino-acid chain: Transcription termination/antitermination protein NusG (178 aa).

The KOW domain occupies valine 126–valine 156.

Belongs to the NusG family.

Its function is as follows. Participates in transcription elongation, termination and antitermination. This is Transcription termination/antitermination protein NusG from Neisseria meningitidis serogroup B (strain ATCC BAA-335 / MC58).